The primary structure comprises 324 residues: Olfactory receptor 7G2 (324 aa).

Residues M1–P25 lie on the Extracellular side of the membrane. N5 is a glycosylation site (N-linked (GlcNAc...) asparagine). The chain crosses the membrane as a helical span at residues V26–L46. The Cytoplasmic portion of the chain corresponds to L47–H54. The chain crosses the membrane as a helical span at residues L55 to T75. The Extracellular portion of the chain corresponds to T76–T99. N-linked (GlcNAc...) asparagine glycosylation is present at N89. Cysteines 97 and 189 form a disulfide. A helical transmembrane segment spans residues Q100–Y120. The Cytoplasmic portion of the chain corresponds to D121 to R139. The chain crosses the membrane as a helical span at residues L140–S160. Residues L161 to I197 lie on the Extracellular side of the membrane. A helical transmembrane segment spans residues L198–S217. Topologically, residues Y218–A237 are cytoplasmic. Residues V238–V258 form a helical membrane-spanning segment. The Extracellular segment spans residues Y259 to T271. The helical transmembrane segment at A272–L292 threads the bilayer. Over R293–E324 the chain is Cytoplasmic.

The protein belongs to the G-protein coupled receptor 1 family.

It localises to the cell membrane. In terms of biological role, odorant receptor. The polypeptide is Olfactory receptor 7G2 (OR7G2) (Homo sapiens (Human)).